The sequence spans 447 residues: Kynurenine 3-monooxygenase (447 aa).

Belongs to the aromatic-ring hydroxylase family. KMO subfamily. It depends on FAD as a cofactor.

The enzyme catalyses L-kynurenine + NADPH + O2 + H(+) = 3-hydroxy-L-kynurenine + NADP(+) + H2O. It functions in the pathway cofactor biosynthesis; NAD(+) biosynthesis; quinolinate from L-kynurenine: step 1/3. Its function is as follows. Catalyzes the hydroxylation of L-kynurenine (L-Kyn) to form 3-hydroxy-L-kynurenine (L-3OHKyn). Required for synthesis of quinolinic acid. The polypeptide is Kynurenine 3-monooxygenase (Flavobacterium psychrophilum (strain ATCC 49511 / DSM 21280 / CIP 103535 / JIP02/86)).